Consider the following 75-residue polypeptide: Protein RALF-like 9 (75 aa).

The signal sequence occupies residues 1–28; sequence MGMSKSIKVILSLALVVFLALAATKVEA. 2 disulfide bridges follow: Cys-46–Cys-54 and Cys-66–Cys-72.

The protein belongs to the plant rapid alkalinization factor (RALF) family.

It localises to the secreted. Cell signaling peptide that may regulate plant stress, growth, and development. Mediates a rapid alkalinization of extracellular space by mediating a transient increase in the cytoplasmic Ca(2+) concentration leading to a calcium-dependent signaling events through a cell surface receptor and a concomitant activation of some intracellular mitogen-activated protein kinases. In Arabidopsis thaliana (Mouse-ear cress), this protein is Protein RALF-like 9 (RALFL9).